The sequence spans 179 residues: Large ribosomal subunit protein uL5 (179 aa).

This sequence belongs to the universal ribosomal protein uL5 family. Part of the 50S ribosomal subunit; part of the 5S rRNA/L5/L18/L25 subcomplex. Contacts the 5S rRNA and the P site tRNA. Forms a bridge to the 30S subunit in the 70S ribosome.

This is one of the proteins that bind and probably mediate the attachment of the 5S RNA into the large ribosomal subunit, where it forms part of the central protuberance. In the 70S ribosome it contacts protein S13 of the 30S subunit (bridge B1b), connecting the 2 subunits; this bridge is implicated in subunit movement. Contacts the P site tRNA; the 5S rRNA and some of its associated proteins might help stabilize positioning of ribosome-bound tRNAs. In Nitratidesulfovibrio vulgaris (strain DSM 19637 / Miyazaki F) (Desulfovibrio vulgaris), this protein is Large ribosomal subunit protein uL5.